We begin with the raw amino-acid sequence, 115 residues long: NADH-ubiquinone oxidoreductase chain 3 (115 aa).

The next 3 helical transmembrane spans lie at 4–24 (ALTL…AFWL), 55–75 (FFLV…LLPL), and 84–104 (LTTM…SLAY).

The protein belongs to the complex I subunit 3 family. As to quaternary structure, core subunit of respiratory chain NADH dehydrogenase (Complex I) which is composed of 45 different subunits. Interacts with TMEM186. Interacts with TMEM242.

It is found in the mitochondrion inner membrane. It catalyses the reaction a ubiquinone + NADH + 5 H(+)(in) = a ubiquinol + NAD(+) + 4 H(+)(out). Core subunit of the mitochondrial membrane respiratory chain NADH dehydrogenase (Complex I) which catalyzes electron transfer from NADH through the respiratory chain, using ubiquinone as an electron acceptor. Essential for the catalytic activity of complex I. This Halichoerus grypus (Gray seal) protein is NADH-ubiquinone oxidoreductase chain 3.